A 279-amino-acid polypeptide reads, in one-letter code: Thymidylate synthase 1 (279 aa).

141–142 contacts dUMP; it reads RR. The active-site Nucleophile is Cys-161. DUMP-binding positions include 181–184, Asn-192, and 222–224; these read RSND and HVY. Asp-184 contacts (6R)-5,10-methylene-5,6,7,8-tetrahydrofolate. Ala-278 is a binding site for (6R)-5,10-methylene-5,6,7,8-tetrahydrofolate.

It belongs to the thymidylate synthase family. Bacterial-type ThyA subfamily. In terms of assembly, homodimer.

It localises to the cytoplasm. The enzyme catalyses dUMP + (6R)-5,10-methylene-5,6,7,8-tetrahydrofolate = 7,8-dihydrofolate + dTMP. It participates in pyrimidine metabolism; dTTP biosynthesis. In terms of biological role, catalyzes the reductive methylation of 2'-deoxyuridine-5'-monophosphate (dUMP) to 2'-deoxythymidine-5'-monophosphate (dTMP) while utilizing 5,10-methylenetetrahydrofolate (mTHF) as the methyl donor and reductant in the reaction, yielding dihydrofolate (DHF) as a by-product. This enzymatic reaction provides an intracellular de novo source of dTMP, an essential precursor for DNA biosynthesis. The polypeptide is Thymidylate synthase 1 (Bacillus spizizenii (strain ATCC 23059 / NRRL B-14472 / W23) (Bacillus subtilis subsp. spizizenii)).